Consider the following 156-residue polypeptide: MNINLTLIGQSIAFAIFVWFCVKYVWPPITAAMEARQKKIADGLSAADRASLDLELAQEKATKELQKAKEEAAALIDQANKRAAQIVEASKEDARKEGEKLIEQARAEIQQERVQARDALRAEVATLAVAGAEKILETSVDAKAHSEMLEKLAAEL.

Residues 12 to 32 form a helical membrane-spanning segment; sequence IAFAIFVWFCVKYVWPPITAA.

This sequence belongs to the ATPase B chain family. As to quaternary structure, F-type ATPases have 2 components, F(1) - the catalytic core - and F(0) - the membrane proton channel. F(1) has five subunits: alpha(3), beta(3), gamma(1), delta(1), epsilon(1). F(0) has three main subunits: a(1), b(2) and c(10-14). The alpha and beta chains form an alternating ring which encloses part of the gamma chain. F(1) is attached to F(0) by a central stalk formed by the gamma and epsilon chains, while a peripheral stalk is formed by the delta and b chains.

The protein resides in the cell inner membrane. In terms of biological role, f(1)F(0) ATP synthase produces ATP from ADP in the presence of a proton or sodium gradient. F-type ATPases consist of two structural domains, F(1) containing the extramembraneous catalytic core and F(0) containing the membrane proton channel, linked together by a central stalk and a peripheral stalk. During catalysis, ATP synthesis in the catalytic domain of F(1) is coupled via a rotary mechanism of the central stalk subunits to proton translocation. Component of the F(0) channel, it forms part of the peripheral stalk, linking F(1) to F(0). The sequence is that of ATP synthase subunit b from Marinobacter nauticus (strain ATCC 700491 / DSM 11845 / VT8) (Marinobacter aquaeolei).